The primary structure comprises 127 residues: Large ribosomal subunit protein bL12 (127 aa).

The disordered stretch occupies residues 98–127 (PKPIKEGAPKAEAESLKSKLEEAGAEVELK).

This sequence belongs to the bacterial ribosomal protein bL12 family. Homodimer. Part of the ribosomal stalk of the 50S ribosomal subunit. Forms a multimeric L10(L12)X complex, where L10 forms an elongated spine to which 2 to 4 L12 dimers bind in a sequential fashion. Binds GTP-bound translation factors.

Functionally, forms part of the ribosomal stalk which helps the ribosome interact with GTP-bound translation factors. Is thus essential for accurate translation. The polypeptide is Large ribosomal subunit protein bL12 (Amoebophilus asiaticus (strain 5a2)).